Here is a 206-residue protein sequence, read N- to C-terminus: Flavin reductase (NADPH) (206 aa).

The NADP(+) site is built by Gly10, Thr12, Gly13, Thr15, Arg35, Ser38, and Arg39. A Phosphoserine modification is found at Ser42. NADP(+)-binding residues include Asp54, Val55, Leu75, and Gly76. Ser82 is subject to Phosphoserine. 5 residues coordinate NADP(+): Met87, Cys109, His132, His153, and Ile154. Cys109 acts as the S-nitroso-cysteine intermediate; for S-nitroso-CoA-dependent nitrosyltransferase activity in catalysis. The S-nitroso-cysteine intermediate; for S-nitroso-CoA-dependent nitrosyltransferase activity role is filled by Cys188.

This sequence belongs to the BLVRB family. As to quaternary structure, monomer.

Its subcellular location is the cytoplasm. The enzyme catalyses reduced riboflavin + NADP(+) = riboflavin + NADPH + 2 H(+). It carries out the reaction bilirubin IXbeta + NADP(+) = biliverdin IXbeta + NADPH + H(+). It catalyses the reaction FMNH2 + NAD(+) = FMN + NADH + 2 H(+). The catalysed reaction is FMNH2 + NADP(+) = FMN + NADPH + 2 H(+). The enzyme catalyses S-nitroso-CoA + L-cysteinyl-[protein] = S-nitroso-L-cysteinyl-[protein] + CoA. It carries out the reaction L-cysteinyl-[SCAN] + S-nitroso-CoA = S-nitroso-L-cysteinyl-[SCAN] + CoA. It catalyses the reaction S-nitroso-L-cysteinyl-[SCAN] + L-cysteinyl-[protein] = L-cysteinyl-[SCAN] + S-nitroso-L-cysteinyl-[protein]. Functionally, enzyme that can both act as a NAD(P)H-dependent reductase and a S-nitroso-CoA-dependent nitrosyltransferase. Promotes fetal heme degradation during development. Also expressed in adult tissues, where it acts as a regulator of hematopoiesis, intermediary metabolism (glutaminolysis, glycolysis, TCA cycle and pentose phosphate pathway) and insulin signaling. Has a broad specificity oxidoreductase activity by catalyzing the NAD(P)H-dependent reduction of a variety of flavins, such as riboflavin, FAD or FMN, biliverdins, methemoglobin and PQQ (pyrroloquinoline quinone). Contributes to fetal heme catabolism by catalyzing reduction of biliverdin IXbeta into bilirubin IXbeta in the liver. Biliverdin IXbeta, which constitutes the major heme catabolite in the fetus is not present in adult. Does not reduce bilirubin IXalpha. Can also reduce the complexed Fe(3+) iron to Fe(2+) in the presence of FMN and NADPH. Acts as a protein nitrosyltransferase by catalyzing nitrosylation of cysteine residues of target proteins, such as HMOX2, INSR and IRS1. S-nitroso-CoA-dependent nitrosyltransferase activity is mediated via a 'ping-pong' mechanism: BLVRB first associates with both S-nitroso-CoA and protein substrate, nitric oxide group is then transferred from S-nitroso-CoA to Cys-109 and Cys-188 residues of BLVRB and from S-nitroso-BLVRB to the protein substrate. Inhibits insulin signaling by mediating nitrosylation of INSR and IRS1, leading to their inhibition. The polypeptide is Flavin reductase (NADPH) (Blvrb) (Mus musculus (Mouse)).